The sequence spans 623 residues: DNA polymerase alpha subunit B (623 aa).

A disordered region spans residues I113 to F151. The segment covering S121–R130 has biased composition (polar residues).

Belongs to the DNA polymerase alpha subunit B family. In terms of assembly, DNA polymerase alpha:primase is a four subunit enzyme complex, which is assembled throughout the cell cycle, and consists of the two DNA polymerase subunits A and B, and the DNA primase large and small subunits. Subunit B binds to subunit A.

It is found in the nucleus. May play an essential role at the early stage of chromosomal DNA replication by coupling the polymerase alpha/primase complex to the cellular replication machinery. The chain is DNA polymerase alpha subunit B (polA2) from Dictyostelium discoideum (Social amoeba).